Consider the following 187-residue polypeptide: UPF0301 protein KPN78578_33170 (187 aa).

The protein belongs to the UPF0301 (AlgH) family.

The chain is UPF0301 protein KPN78578_33170 from Klebsiella pneumoniae subsp. pneumoniae (strain ATCC 700721 / MGH 78578).